The chain runs to 516 residues: L-amino acid oxidase bordonein-L (516 aa).

Positions M1–C18 are cleaved as a signal peptide. C28 and C189 are joined by a disulfide. FAD contacts are provided by residues M61–A62, E81–A82, R89, and G103–R106. Substrate is bound by residues R106 and H239. FAD is bound at residue V279. C349 and C430 are joined by a disulfide. N-linked (GlcNAc...) asparagine glycosylation occurs at N379. Y390 provides a ligand contact to substrate. FAD is bound by residues E475 and G482–T487. G482–W483 lines the substrate pocket.

In terms of assembly, homodimer; non-covalently linked. It depends on FAD as a cofactor. N-glycosylated. N-glycan probably consists of the disaccharide N-acetylglucosamine-fucose (HexNAc-Fuc). Expressed by the venom gland.

It localises to the secreted. It catalyses the reaction an L-alpha-amino acid + O2 + H2O = a 2-oxocarboxylate + H2O2 + NH4(+). The catalysed reaction is L-leucine + O2 + H2O = 4-methyl-2-oxopentanoate + H2O2 + NH4(+). The enzyme catalyses L-phenylalanine + O2 + H2O = 3-phenylpyruvate + H2O2 + NH4(+). It carries out the reaction L-tryptophan + O2 + H2O = indole-3-pyruvate + H2O2 + NH4(+). It catalyses the reaction L-methionine + O2 + H2O = 4-methylsulfanyl-2-oxobutanoate + H2O2 + NH4(+). The catalysed reaction is L-isoleucine + O2 + H2O = (S)-3-methyl-2-oxopentanoate + H2O2 + NH4(+). The enzyme catalyses L-arginine + O2 + H2O = 5-guanidino-2-oxopentanoate + H2O2 + NH4(+). It carries out the reaction L-histidine + O2 + H2O = 3-(imidazol-5-yl)pyruvate + H2O2 + NH4(+). In terms of biological role, catalyzes an oxidative deamination of predominantly hydrophobic and aromatic L-amino acids, thus producing hydrogen peroxide that may contribute to the diverse toxic effects of this enzyme. Is highly active on L-Met, L-Leu, L-Trp, and L-Phe, moderately active on L-Ile, L-His, and L-Arg, and weakly or not active on L-Gln, L-Val, L-Asn, L-Ala, L-Lys, L-Ser, L-Thr, L-Pro, L-Asp, L-Gly, L-Tyr, L-Cys and L-Glu. This enzyme exhibits diverse biological activities, such as hemorrhage, hemolysis, edema, apoptosis of vascular endothelial cells or tumor cell lines, antibacterial and antiparasitic activities, as well as regulation of platelet aggregation. Its effect on platelets is controversial, since it either induces aggregation or inhibits agonist-induced aggregation. These different effects are probably due to different experimental conditions. In vitro, the enzyme exhibits cytotoxicity against fibroblast cell line and kills Leishmania amazonensis promastigotes, intensified by substrate addition. This is L-amino acid oxidase bordonein-L from Crotalus durissus terrificus (South American rattlesnake).